The sequence spans 631 residues: MTILENIRQPRDLKALPEEQLHELSEEIRQFLVHAVTRTGGHLGPNLGVVELTIALHRVFESPVDRILWDTGHQSYVHKLLTGRQDFSKLRGKGGLSGYPSREESEHDVIENSHASTALGWADGLAKARRVQGEKGHVVAVIGGRALTGGMAWEALNNIAAAKDQPLIIVVNDNERSYAPTIGGLANHLATLRTTDGYEKVLAWGKDVLLRTPIVGHPLYEALHGAKKGFKDAFAPQGMFEDLGLKYVGPIDGHDIGAVESALRRAKRFHGPVLVHCLTVKGRGYEPALAHEEDHFHTVGVMDPLTCEPLSPTDGPSWTSVFGDEIVRIGAEREDIVAITAAMLHPVGLARFADRFPDRVWDVGIAEQHAAVSAAGLATGGLHPVVAVYATFLNRAFDQLLMDVALHRCGVTFVLDRAGVTGVDGASHNGMWDMSVLQVVPGLRIAAPRDADHVRAQLREAVAVDDAPTLIRFPKESVGPRIPALDRVGGLDVLHRDERPEVLLVAVGVMAQVCLQTAELLRARGIGCTVVDPRWVKPVDPVLPPLAAEHRLVAVVEDNSRAAGVGSAVALALGDADVDVPVRRFGIPEQFLAHARRGEVLADIGLTPVEIAGRIGASLPVREEPAEEQPA.

Thiamine diphosphate is bound by residues H73, 113 to 115, N174, Y285, and E367; that span reads SHA. Mg(2+) is bound at residue N174.

Belongs to the transketolase family. DXPS subfamily. As to quaternary structure, homodimer. The cofactor is Mg(2+). Thiamine diphosphate is required as a cofactor.

It carries out the reaction D-glyceraldehyde 3-phosphate + pyruvate + H(+) = 1-deoxy-D-xylulose 5-phosphate + CO2. The protein operates within metabolic intermediate biosynthesis; 1-deoxy-D-xylulose 5-phosphate biosynthesis; 1-deoxy-D-xylulose 5-phosphate from D-glyceraldehyde 3-phosphate and pyruvate: step 1/1. Functionally, catalyzes the acyloin condensation reaction between C atoms 2 and 3 of pyruvate and glyceraldehyde 3-phosphate to yield 1-deoxy-D-xylulose-5-phosphate (DXP). The protein is 1-deoxy-D-xylulose-5-phosphate synthase of Streptomyces sp. (strain CL190).